A 343-amino-acid chain; its full sequence is Anthranilate phosphoribosyltransferase (343 aa).

5-phospho-alpha-D-ribose 1-diphosphate is bound by residues glycine 81, 84–85 (GD), 91–94 (NVST), 109–117 (KHGNRSVSS), and serine 121. Glycine 81 is a binding site for anthranilate. Serine 93 is a binding site for Mg(2+). Asparagine 112 lines the anthranilate pocket. Residue arginine 167 participates in anthranilate binding. Mg(2+) contacts are provided by aspartate 226 and glutamate 227.

This sequence belongs to the anthranilate phosphoribosyltransferase family. As to quaternary structure, homodimer. Mg(2+) is required as a cofactor.

It carries out the reaction N-(5-phospho-beta-D-ribosyl)anthranilate + diphosphate = 5-phospho-alpha-D-ribose 1-diphosphate + anthranilate. The protein operates within amino-acid biosynthesis; L-tryptophan biosynthesis; L-tryptophan from chorismate: step 2/5. Catalyzes the transfer of the phosphoribosyl group of 5-phosphorylribose-1-pyrophosphate (PRPP) to anthranilate to yield N-(5'-phosphoribosyl)-anthranilate (PRA). The chain is Anthranilate phosphoribosyltransferase from Chromohalobacter salexigens (strain ATCC BAA-138 / DSM 3043 / CIP 106854 / NCIMB 13768 / 1H11).